The primary structure comprises 188 residues: dCTP deaminase (188 aa).

DCTP is bound by residues 111-116 (KSTYAR), 135-137 (TLE), Gln156, Tyr170, and Gln180. Glu137 (proton donor/acceptor) is an active-site residue.

The protein belongs to the dCTP deaminase family. Homotrimer.

It carries out the reaction dCTP + H2O + H(+) = dUTP + NH4(+). It participates in pyrimidine metabolism; dUMP biosynthesis; dUMP from dCTP (dUTP route): step 1/2. Its function is as follows. Catalyzes the deamination of dCTP to dUTP. The chain is dCTP deaminase from Thioalkalivibrio sulfidiphilus (strain HL-EbGR7).